The following is a 709-amino-acid chain: Elongation factor G (709 aa).

The region spanning 9–296 (AKVRNIGIMA…AVVRYLPSPL (288 aa)) is the tr-type G domain. Residues 18-25 (AHIDAGKT), 86-90 (DTPGH), and 140-143 (NKLD) contribute to the GTP site.

It belongs to the TRAFAC class translation factor GTPase superfamily. Classic translation factor GTPase family. EF-G/EF-2 subfamily.

The protein resides in the cytoplasm. Its function is as follows. Catalyzes the GTP-dependent ribosomal translocation step during translation elongation. During this step, the ribosome changes from the pre-translocational (PRE) to the post-translocational (POST) state as the newly formed A-site-bound peptidyl-tRNA and P-site-bound deacylated tRNA move to the P and E sites, respectively. Catalyzes the coordinated movement of the two tRNA molecules, the mRNA and conformational changes in the ribosome. In Streptomyces griseus subsp. griseus (strain JCM 4626 / CBS 651.72 / NBRC 13350 / KCC S-0626 / ISP 5235), this protein is Elongation factor G.